A 304-amino-acid chain; its full sequence is Glutaminase (304 aa).

The substrate site is built by Ser-63, Asn-114, Glu-158, Asn-165, Tyr-189, Tyr-240, and Val-258.

It belongs to the glutaminase family. In terms of assembly, homotetramer.

The enzyme catalyses L-glutamine + H2O = L-glutamate + NH4(+). This is Glutaminase from Shewanella sp. (strain ANA-3).